Consider the following 517-residue polypeptide: Cytochrome P450 11B, mitochondrial (517 aa).

The N-terminal 45 residues, 1–45, are a transit peptide targeting the mitochondrion; it reads MLEKTAARQIGSCLMRCRTLDTTSPLWTGFSRLSTAPLIHEARED. Cysteine 465 contributes to the heme binding site.

It belongs to the cytochrome P450 family. Heme serves as cofactor.

The protein resides in the mitochondrion membrane. The enzyme catalyses a steroid + 2 reduced [adrenodoxin] + O2 + 2 H(+) = an 11beta-hydroxysteroid + 2 oxidized [adrenodoxin] + H2O. Functionally, has 11 beta-hydroxylation, 18-hydroxylation activities and aldosterone synthetic activity. Catalyzes the final steps of glucocorticoid and mineralocorticoid biosynthesis. The protein is Cytochrome P450 11B, mitochondrial (CYP11B) of Aquarana catesbeiana (American bullfrog).